The sequence spans 373 residues: 2-aminoethylphosphonate--pyruvate transaminase (373 aa).

At K191 the chain carries N6-(pyridoxal phosphate)lysine.

It belongs to the class-V pyridoxal-phosphate-dependent aminotransferase family. PhnW subfamily. As to quaternary structure, homodimer. Requires pyridoxal 5'-phosphate as cofactor.

The catalysed reaction is (2-aminoethyl)phosphonate + pyruvate = phosphonoacetaldehyde + L-alanine. Its function is as follows. Involved in phosphonate degradation. In Burkholderia ambifaria (strain MC40-6), this protein is 2-aminoethylphosphonate--pyruvate transaminase.